Here is a 333-residue protein sequence, read N- to C-terminus: Phosphate acyltransferase (333 aa).

Belongs to the PlsX family. In terms of assembly, homodimer. Probably interacts with PlsY.

It localises to the cytoplasm. The catalysed reaction is a fatty acyl-[ACP] + phosphate = an acyl phosphate + holo-[ACP]. It participates in lipid metabolism; phospholipid metabolism. Functionally, catalyzes the reversible formation of acyl-phosphate (acyl-PO(4)) from acyl-[acyl-carrier-protein] (acyl-ACP). This enzyme utilizes acyl-ACP as fatty acyl donor, but not acyl-CoA. This is Phosphate acyltransferase from Ligilactobacillus salivarius (strain UCC118) (Lactobacillus salivarius).